We begin with the raw amino-acid sequence, 689 residues long: MADNLVIVESPAKAKTIEKYLGKKYKVIASMGHVRDLPRSQMGVDTEDNYEPKYITIRGKGPVVKELKKHAKKAKNVFLASDPDREGEAIAWHLSKILELEDSKENRVVFNEITKDAVKESFKNPREIEMNLVDAQQARRILDRLVGYNISPVLWKKVKKGLSAGRVQSVALRLVIDRENEIRNFKPEEYWIIEGEFRYKKSKFNAKFLHYKNKPFKLKTKKDIEKITAALDGDQFEITNVTKKEKTRNPANPFTTSTLQQEAARKLNFKARKTMMVAQQLYEGIDLKKQGTIGLITYMRTDSTRISDTAKAEAKQYITDKYGESYTSKRKASGKQGDQDAHEAIRPSSTMRTPDDMKSFLTKDQYRLYKLIWERFVASQMAPAILDTVSLDITQGDIKFRANGQTIKFKGFMTLYVETKDDIDSEKENKLPKLEQGDKVTATQIEPAQHYTQPPPRYTEARLVKTLEELKIGRPSTYAPTIDTIQKRNYVKLESKRFVPTELGEIVHEQVKEYFPEIIDVEFTVNMETLLDKIAEGDITWRKVIDGFFSSFKQDVERAEEEMEKIEIKDEPAGEDCEVCGSPMVIKMGRYGKFMACSNFPDCRNTKAIVKSIGVKCPKCNDGDVVERKSKKNRVFYGCSKYPECDFISWDKPIGRDCPKCNQYLVENKKGKTTQVICSNCDYKEAAQK.

Residues 3–113 (DNLVIVESPA…KENRVVFNEI (111 aa)) enclose the Toprim domain. Mg(2+) is bound by residues glutamate 9 and aspartate 82. Positions 129–557 (EMNLVDAQQA…FFSSFKQDVE (429 aa)) constitute a Topo IA-type catalytic domain. The interaction with DNA stretch occupies residues 163-168 (SAGRVQ). Tyrosine 298 (O-(5'-phospho-DNA)-tyrosine intermediate) is an active-site residue. The disordered stretch occupies residues 328 to 357 (SKRKASGKQGDQDAHEAIRPSSTMRTPDDM). 3 consecutive C4-type zinc fingers follow at residues 577 to 603 (CEVC…FPDC), 617 to 645 (CPKC…YPEC), and 658 to 681 (CPKC…CSNC).

This sequence belongs to the type IA topoisomerase family. In terms of assembly, monomer. Mg(2+) is required as a cofactor.

The enzyme catalyses ATP-independent breakage of single-stranded DNA, followed by passage and rejoining.. Releases the supercoiling and torsional tension of DNA, which is introduced during the DNA replication and transcription, by transiently cleaving and rejoining one strand of the DNA duplex. Introduces a single-strand break via transesterification at a target site in duplex DNA. The scissile phosphodiester is attacked by the catalytic tyrosine of the enzyme, resulting in the formation of a DNA-(5'-phosphotyrosyl)-enzyme intermediate and the expulsion of a 3'-OH DNA strand. The free DNA strand then undergoes passage around the unbroken strand, thus removing DNA supercoils. Finally, in the religation step, the DNA 3'-OH attacks the covalent intermediate to expel the active-site tyrosine and restore the DNA phosphodiester backbone. This chain is DNA topoisomerase 1, found in Staphylococcus aureus (strain bovine RF122 / ET3-1).